We begin with the raw amino-acid sequence, 328 residues long: Probable voltage-gated potassium channel subunit beta (328 aa).

Residues Trp-21, Gln-27, and Asp-49 each contribute to the NADP(+) site. The active-site Proton donor/acceptor is Tyr-54. Residues Ser-152, Gln-178, Trp-207, Ser-208, Pro-209, Leu-210, Ala-211, Lys-218, Arg-229, Gly-285, Thr-287, Gln-291, Glu-294, and Asn-295 each contribute to the NADP(+) site.

The protein belongs to the shaker potassium channel beta subunit family. As to quaternary structure, forms heteromultimeric complexes with potassium channel alpha subunits. As to expression, expressed in roots, leaves and flowers (at protein level).

Probable accessory potassium channel protein which modulates the activity of the pore-forming alpha subunit. The protein is Probable voltage-gated potassium channel subunit beta (KAB1) of Arabidopsis thaliana (Mouse-ear cress).